The sequence spans 91 residues: Ribonuclease P protein component 4 (91 aa).

Cys48, Cys51, Cys71, and Cys74 together coordinate Zn(2+).

The protein belongs to the eukaryotic/archaeal RNase P protein component 4 family. In terms of assembly, consists of a catalytic RNA component and at least 4-5 protein subunits. Requires Zn(2+) as cofactor.

Its subcellular location is the cytoplasm. It catalyses the reaction Endonucleolytic cleavage of RNA, removing 5'-extranucleotides from tRNA precursor.. Functionally, part of ribonuclease P, a protein complex that generates mature tRNA molecules by cleaving their 5'-ends. In Picrophilus torridus (strain ATCC 700027 / DSM 9790 / JCM 10055 / NBRC 100828 / KAW 2/3), this protein is Ribonuclease P protein component 4.